The primary structure comprises 597 residues: uncharacterized protein (597 aa).

Basic and acidic residues predominate over residues 1-23; it reads MSHEGSRQARDRGVTRSKAEKAR. Disordered regions lie at residues 1-32 and 171-192; these read MSHE…VPQV and RESQ…NPRP. Over residues 175-186 the composition is skewed to low complexity; the sequence is EPTQSSEPSAEP. Phosphoserine is present on residues Ser-237 and Ser-241. Disordered stretches follow at residues 302 to 335 and 549 to 569; these read SLLS…MRLD and EAEE…GVSK. Residues 557-568 show a composition bias toward polar residues; the sequence is APEQQPIQTGVS.

This is an uncharacterized protein from Rattus norvegicus (Rat).